The following is a 224-amino-acid chain: UPF0758 protein Avin_02940 (224 aa).

Positions 102-224 (ALESPQAVRD…PLSMAEQGWL (123 aa)) constitute an MPN domain. Residues histidine 173, histidine 175, and aspartate 186 each contribute to the Zn(2+) site. The JAMM motif signature appears at 173–186 (HNHPSGIAEPSQAD).

Belongs to the UPF0758 family.

This chain is UPF0758 protein Avin_02940, found in Azotobacter vinelandii (strain DJ / ATCC BAA-1303).